Consider the following 461-residue polypeptide: Cysteine--tRNA ligase (461 aa).

Cysteine 30 is a binding site for Zn(2+). Positions 32-42 (PTVYSYAHIGN) match the 'HIGH' region motif. Zn(2+) is bound by residues cysteine 212, histidine 237, and glutamate 241. Positions 270-274 (KMSKS) match the 'KMSKS' region motif. ATP is bound at residue lysine 273.

Belongs to the class-I aminoacyl-tRNA synthetase family. As to quaternary structure, monomer. Requires Zn(2+) as cofactor.

The protein resides in the cytoplasm. It carries out the reaction tRNA(Cys) + L-cysteine + ATP = L-cysteinyl-tRNA(Cys) + AMP + diphosphate. In Maricaulis maris (strain MCS10) (Caulobacter maris), this protein is Cysteine--tRNA ligase.